The primary structure comprises 484 residues: Acetaldehyde dehydrogenase (acetylating) (484 aa).

Belongs to the aldehyde dehydrogenase family.

It carries out the reaction acetaldehyde + NAD(+) + CoA = acetyl-CoA + NADH + H(+). It participates in organosulfur degradation; alkanesulfonate degradation. Its function is as follows. Involved in an anaerobic respiration pathway that converts the sulfonate taurine (2-aminoethanesulfonate) to ammonia, acetate and sulfide. Catalyzes the oxidation of acetaldehyde to acetyl-CoA in the presence of CoASH and NAD(+). Highly prefers NAD(+) over NADP(+). The sequence is that of Acetaldehyde dehydrogenase (acetylating) from Bilophila wadsworthia (strain 3_1_6).